Reading from the N-terminus, the 199-residue chain is Putative acetyltransferase SAR2635 (199 aa).

It belongs to the transferase hexapeptide repeat family.

This Staphylococcus aureus (strain MRSA252) protein is Putative acetyltransferase SAR2635.